A 103-amino-acid polypeptide reads, in one-letter code: UPF0122 protein FN1394 (103 aa).

It belongs to the UPF0122 family.

Functionally, might take part in the signal recognition particle (SRP) pathway. This is inferred from the conservation of its genetic proximity to ftsY/ffh. May be a regulatory protein. The chain is UPF0122 protein FN1394 from Fusobacterium nucleatum subsp. nucleatum (strain ATCC 25586 / DSM 15643 / BCRC 10681 / CIP 101130 / JCM 8532 / KCTC 2640 / LMG 13131 / VPI 4355).